A 348-amino-acid chain; its full sequence is NADH-ubiquinone oxidoreductase chain 2 (348 aa).

The next 9 helical transmembrane spans lie at Met1–Ala21, Phe60–Leu80, Thr96–Pro116, Asn149–Leu169, Ile177–Gln194, Thr198–Leu220, Ile238–Gly258, Asp273–Leu293, and Met328–Ile348.

This sequence belongs to the complex I subunit 2 family.

The protein localises to the mitochondrion inner membrane. The catalysed reaction is a ubiquinone + NADH + 5 H(+)(in) = a ubiquinol + NAD(+) + 4 H(+)(out). Functionally, core subunit of the mitochondrial membrane respiratory chain NADH dehydrogenase (Complex I) that is believed to belong to the minimal assembly required for catalysis. Complex I functions in the transfer of electrons from NADH to the respiratory chain. The immediate electron acceptor for the enzyme is believed to be ubiquinone. The polypeptide is NADH-ubiquinone oxidoreductase chain 2 (MT-ND2) (Tetraodon nigroviridis (Spotted green pufferfish)).